Reading from the N-terminus, the 424-residue chain is Nuclear hormone receptor family member nhr-55 (424 aa).

The segment covering 1-19 (MNSPSSSSSFCSSSSSPSS) has biased composition (low complexity). The segment at 1-20 (MNSPSSSSSFCSSSSSPSSL) is disordered. A DNA-binding region (nuclear receptor) is located at residues 25-100 (PDTCQVCGQK…VGMTIENFQF (76 aa)). 2 consecutive NR C4-type zinc fingers follow at residues 28–55 (CQVCGQKSHGKHFGAVTCRACAAFFRRC) and 64–88 (CRRNMNCEFLKNGWFNCKPCRLKKC). The NR LBD domain occupies 169-424 (EVPLHTPNAL…FSHPEVFIDL (256 aa)).

This sequence belongs to the nuclear hormone receptor family.

Its subcellular location is the nucleus. Functionally, orphan nuclear receptor. In Caenorhabditis elegans, this protein is Nuclear hormone receptor family member nhr-55 (nhr-55).